Consider the following 205-residue polypeptide: GTP cyclohydrolase-2 (205 aa).

Residue 49–53 (RIHSE) participates in GTP binding. Zn(2+) contacts are provided by cysteine 54, cysteine 65, and cysteine 67. Residues glutamine 70, 92–94 (EGR), and threonine 114 contribute to the GTP site. Aspartate 126 functions as the Proton acceptor in the catalytic mechanism. Arginine 128 serves as the catalytic Nucleophile. Residues threonine 149 and lysine 154 each coordinate GTP.

It belongs to the GTP cyclohydrolase II family. The cofactor is Zn(2+).

The catalysed reaction is GTP + 4 H2O = 2,5-diamino-6-hydroxy-4-(5-phosphoribosylamino)-pyrimidine + formate + 2 phosphate + 3 H(+). The protein operates within cofactor biosynthesis; riboflavin biosynthesis; 5-amino-6-(D-ribitylamino)uracil from GTP: step 1/4. Its function is as follows. Catalyzes the conversion of GTP to 2,5-diamino-6-ribosylamino-4(3H)-pyrimidinone 5'-phosphate (DARP), formate and pyrophosphate. This Shewanella sediminis (strain HAW-EB3) protein is GTP cyclohydrolase-2.